A 181-amino-acid polypeptide reads, in one-letter code: Oligoribonuclease (181 aa).

One can recognise an Exonuclease domain in the interval 8-171 (LVWIDMEMTG…DDIRESIAEL (164 aa)). The active site involves Tyr129.

It belongs to the oligoribonuclease family.

It localises to the cytoplasm. In terms of biological role, 3'-to-5' exoribonuclease specific for small oligoribonucleotides. This Pseudoalteromonas atlantica (strain T6c / ATCC BAA-1087) protein is Oligoribonuclease.